The following is a 447-amino-acid chain: Dimethylsulfoniopropionate lyase DddP (447 aa).

The disordered stretch occupies residues 1-26; sequence MNRHFNATRKIDPSRGATLGDGSPND. Aspartate 295, aspartate 297, aspartate 307, histidine 371, glutamate 406, and glutamate 421 together coordinate a divalent metal cation.

The protein belongs to the peptidase M24B family. Homodimer. Requires a divalent metal cation as cofactor.

The catalysed reaction is S,S-dimethyl-beta-propiothetin = acrylate + dimethyl sulfide + H(+). Functionally, able to cleave dimethylsulfoniopropionate (DMSP), releasing dimethyl sulfide (DMS). DMS is the principal form by which sulfur is transported from oceans to the atmosphere. The real activity of the protein is however subject to debate and it is unclear whether it constitutes a real dimethylsulfoniopropionate lyase in vivo: the low activity with DMSP as substrate suggests that DMSP is not its native substrate. This Roseobacter denitrificans (strain ATCC 33942 / OCh 114) (Erythrobacter sp. (strain OCh 114)) protein is Dimethylsulfoniopropionate lyase DddP.